A 323-amino-acid chain; its full sequence is Small ribosomal subunit protein uS2 (323 aa).

The disordered stretch occupies residues 295–323; it reads VVNRDRAGFNKKQPKAEEAAKPAEKKAEK.

Belongs to the universal ribosomal protein uS2 family.

This chain is Small ribosomal subunit protein uS2, found in Mycoplasmoides gallisepticum (strain R(low / passage 15 / clone 2)) (Mycoplasma gallisepticum).